Here is a 538-residue protein sequence, read N- to C-terminus: Mitochondrial distribution and morphology protein 34 (538 aa).

Residues 1–224 form the SMP-LTD domain; the sequence is MSFRFDRSVF…LPTALFNMSQ (224 aa). Disordered stretches follow at residues 26–55 and 231–251; these read ALNP…RKSG and DGSR…NQPS.

The protein belongs to the MDM34 family. As to quaternary structure, component of the ER-mitochondria encounter structure (ERMES) or MDM complex, composed of MMM1, MDM10, MDM12 and MDM34.

It localises to the mitochondrion outer membrane. Functionally, component of the ERMES/MDM complex, which serves as a molecular tether to connect the endoplasmic reticulum (ER) and mitochondria. Components of this complex are involved in the control of mitochondrial shape and protein biogenesis, and function in nonvesicular lipid trafficking between the ER and mitochondria. MDM34 is required for the interaction of the ER-resident membrane protein MMM1 and the outer mitochondrial membrane-resident beta-barrel protein MDM10. The chain is Mitochondrial distribution and morphology protein 34 from Candida glabrata (strain ATCC 2001 / BCRC 20586 / JCM 3761 / NBRC 0622 / NRRL Y-65 / CBS 138) (Yeast).